The chain runs to 647 residues: Frizzled-1 (647 aa).

An N-terminal signal peptide occupies residues 1 to 69 (MAEEEAPKKS…WLLEAPLLLG (69 aa)). Residues 73–322 (QAAGQGPGQG…PEELRFSRTW (250 aa)) are Extracellular-facing. The segment at 74 to 104 (AAGQGPGQGPGPGQQPPPPPQQQQSGQQYNG) is disordered. Positions 111–230 (PDHGYCQPIS…HGAGELCVGQ (120 aa)) constitute an FZ domain. 5 disulfides stabilise this stretch: Cys116-Cys177, Cys124-Cys170, Cys161-Cys198, Cys187-Cys227, and Cys191-Cys215. An N-linked (GlcNAc...) asparagine glycan is attached at Asn130. The N-linked (GlcNAc...) asparagine glycan is linked to Asn231. The helical transmembrane segment at 323–343 (IGIWSVLCCASTLFTVLTYLV) threads the bilayer. Residues 344 to 354 (DMRRFSYPERP) lie on the Cytoplasmic side of the membrane. Residues 355-375 (IIFLSGCYTAVAVAYIAGFLL) traverse the membrane as a helical segment. Residues 376–402 (EDRVVCNDKFAEDGARTVAQGTKKEGC) are Extracellular-facing. The chain crosses the membrane as a helical span at residues 403-423 (TILFMMLYFFSMASSIWWVIL). At 424–445 (SLTWFLAAGMKWGHEAIEANSQ) the chain is on the cytoplasmic side. The chain crosses the membrane as a helical span at residues 446 to 466 (YFHLAAWAVPAIKTITILALG). Topologically, residues 467 to 489 (QVDGDVLSGVCFVGLNNVDALRG) are extracellular. A helical transmembrane segment spans residues 490-510 (FVLAPLFVYLFIGTSFLLAGF). Residues 511 to 536 (VSLFRIRTIMKHDGTKTEKLEKLMVR) lie on the Cytoplasmic side of the membrane. A helical transmembrane segment spans residues 537–557 (IGVFSVLYTVPATIVIACYFY). Residues 558 to 601 (EQAFRDQWERSWVAQSCKSYAIPCPHLQAGGGAPPHPPMSPDFT) lie on the Extracellular side of the membrane. A helical transmembrane segment spans residues 602–622 (VFMIKYLMTLIVGITSGFWIW). Residues 623–647 (SGKTLNSWRKFYTRLTNSKQGETTV) are Cytoplasmic-facing. The Lys-Thr-X-X-X-Trp motif, mediates interaction with the PDZ domain of Dvl family members motif lies at 625–630 (KTLNSW). A PDZ-binding motif is present at residues 645–647 (TTV).

This sequence belongs to the G-protein coupled receptor Fz/Smo family. As to quaternary structure, interacts with MYOC. Interacts with WNT7B. (Microbial infection) Interacts with C.difficile toxin TcdB; frizzled receptors constitute the major host receptors for TcdB in the colonic epithelium. Post-translationally, ubiquitinated by ZNRF3, leading to its degradation by the proteasome. In terms of tissue distribution, expressed in adult heart, placenta, lung, kidney, pancreas, prostate, and ovary and in fetal lung and kidney.

The protein localises to the cell membrane. Functionally, receptor for Wnt proteins. Activated by WNT3A, WNT3, WNT1 and to a lesser extent WNT2, but apparently not by WNT4, WNT5A, WNT5B, WNT6, WNT7A or WNT7B. Contradictory results showing activation by WNT7B have been described for mouse. Functions in the canonical Wnt/beta-catenin signaling pathway. The canonical Wnt/beta-catenin signaling pathway leads to the activation of disheveled proteins, inhibition of GSK-3 kinase, nuclear accumulation of beta-catenin and activation of Wnt target genes. A second signaling pathway involving PKC and calcium fluxes has been seen for some family members, but it is not yet clear if it represents a distinct pathway or if it can be integrated in the canonical pathway, as PKC seems to be required for Wnt-mediated inactivation of GSK-3 kinase. Both pathways seem to involve interactions with G-proteins. May be involved in transduction and intercellular transmission of polarity information during tissue morphogenesis and/or in differentiated tissues. Its function is as follows. (Microbial infection) Acts as a receptor for C.difficile toxin TcdB in the colonic epithelium. The chain is Frizzled-1 (FZD1) from Homo sapiens (Human).